Consider the following 429-residue polypeptide: MAIIDDARKGIITDEMKKISLIEKISPEKVRKRIVEGKIMLIRNEKYPSKKIVAIGKGLTTKVNINIGTSSEVVNLDMELEKVKIANKWGDTLMDLSTGGDLDLIRREIIKHSELPVGTVPVYQVFIESFKHKSGGAYFTEDDLLNTIEKHLKDGVAFMTIHAGLTKDLAIRALKSNRIIPIVSRGGDMIAGWMIHNNSENPYRKNWDYILEMFKQYDAVISLGDALRPGATGDAHDEFQIGELLETARLVKSALEKGVQVMVEGPGHVPLNEIAWDVKLMKKLTGGVPYYVLGPLPIDVGAPYDHIASAIGAAIASASGADLLCYLTPAEHLSLPTVEQVEEGAIAYRIAAHAGDIVKLGKKVRNWDDVVSYYRGKLEWEKMISSLIDPERAMKVYTQFGKPKVRACTMCGGYCPMMWAMEQVRKISD.

Residues Asn66, Met94, Tyr123, His162, 184-186 (SRG), 225-228 (DALR), and Glu264 each bind substrate. His268 is a binding site for Zn(2+). Residue Tyr291 participates in substrate binding. His332 lines the Zn(2+) pocket. 3 residues coordinate [4Fe-4S] cluster: Cys408, Cys411, and Cys415.

Belongs to the ThiC family. It depends on [4Fe-4S] cluster as a cofactor.

It carries out the reaction 5-amino-1-(5-phospho-beta-D-ribosyl)imidazole + S-adenosyl-L-methionine = 4-amino-2-methyl-5-(phosphooxymethyl)pyrimidine + CO + 5'-deoxyadenosine + formate + L-methionine + 3 H(+). It functions in the pathway cofactor biosynthesis; thiamine diphosphate biosynthesis. Its function is as follows. Catalyzes the synthesis of the hydroxymethylpyrimidine phosphate (HMP-P) moiety of thiamine from aminoimidazole ribotide (AIR) in a radical S-adenosyl-L-methionine (SAM)-dependent reaction. This is Phosphomethylpyrimidine synthase from Sulfurisphaera tokodaii (strain DSM 16993 / JCM 10545 / NBRC 100140 / 7) (Sulfolobus tokodaii).